A 503-amino-acid chain; its full sequence is Ferulic acid decarboxylase 1 (503 aa).

Mn(2+)-binding residues include Asn170, His193, and Glu236. Prenylated FMN contacts are provided by residues 170 to 175 (NWSIAR), 192 to 193 (QH), and Glu236. Residue Glu285 is the Proton donor of the active site. Residue Lys394 coordinates prenylated FMN.

The protein belongs to the UbiD family. UbiD-like/FDC subfamily. As to quaternary structure, homodimer. May form higher order oligomers. Mn(2+) is required as a cofactor. It depends on prenylated FMN as a cofactor.

The protein resides in the cytoplasm. It carries out the reaction (E)-4-coumarate + H(+) = 4-vinylphenol + CO2. The catalysed reaction is (E)-cinnamate + H(+) = styrene + CO2. It catalyses the reaction (E)-ferulate + H(+) = 2-methoxy-4-vinylphenol + CO2. Catalyzes the reversible decarboxylation of aromatic carboxylic acids like ferulic acid, p-coumaric acid or cinnamic acid, producing the corresponding vinyl derivatives 4-vinylphenol, 4-vinylguaiacol, and styrene, respectively, which play the role of aroma metabolites. Not essential for ubiquinone synthesis. The polypeptide is Ferulic acid decarboxylase 1 (Saccharomyces cerevisiae (strain ATCC 204508 / S288c) (Baker's yeast)).